The primary structure comprises 42 residues: Omega-theraphotoxin-Asp3a (42 aa).

Cystine bridges form between Cys-1/Cys-16, Cys-8/Cys-21, and Cys-15/Cys-30.

It belongs to the neurotoxin 14 (magi-1) family. 08 (Ltx-4) subfamily. Expressed by the venom gland.

It is found in the secreted. Inhibits voltage-gated calcium channels (Cav) in rat cerebellar granule cells. The sequence is that of Omega-theraphotoxin-Asp3a from Aphonopelma sp. (American tarantula).